The following is a 454-amino-acid chain: Growth/differentiation factor 6 (454 aa).

A signal peptide spans 1–22 (MDTPRVLLWAIFLISFLWDLPG). Positions 23–334 (FQQASISSSS…LPSPGRRRRR (312 aa)) are excised as a propeptide. A disordered region spans residues 28-93 (ISSSSSSSTE…QGQEPPGRGL (66 aa)). Composition is skewed to basic and acidic residues over residues 39–52 (DSTKDVGNRKEGKM) and 60–73 (AEGRTPPEHGLRQK). Residues 81–92 (GQHQGQEPPGRG) show a composition bias toward low complexity. Residue Asn-117 is glycosylated (N-linked (GlcNAc...) asparagine). Disordered stretches follow at residues 247 to 268 (DTGARARGPQQPPPLDLRSLGF) and 303 to 350 (AEAA…KKSR). Positions 303–319 (AEAAGAEGSWPAPSGSP) are enriched in low complexity. Positions 329 to 350 (GRRRRRTAFASRHGKRHGKKSR) are enriched in basic residues. 3 disulfides stabilise this stretch: Cys-353–Cys-419, Cys-382–Cys-451, and Cys-386–Cys-453.

It belongs to the TGF-beta family. As to quaternary structure, homodimer; disulfide-linked. As to expression, expressed in different subsets of developing joints. Highly expressed in the cochlea.

The protein resides in the secreted. Growth factor that controls proliferation and cellular differentiation in the retina and bone formation. Plays a key role in regulating apoptosis during retinal development. Establishes dorsal-ventral positional information in the retina and controls the formation of the retinotectal map. Required for normal formation of bones and joints in the limbs, skull, digits and axial skeleton. Plays a key role in establishing boundaries between skeletal elements during development. Regulation of GDF6 expression seems to be a mechanism for evolving species-specific changes in skeletal structures. Seems to positively regulate differentiation of chondrogenic tissue through the growth factor receptors subunits BMPR1A, BMPR1B, BMPR2 and ACVR2A, leading to the activation of SMAD1-SMAD5-SMAD8 complex. The regulation of chondrogenic differentiation is inhibited by NOG. Also involved in the induction of adipogenesis from mesenchymal stem cells. This mechanism acts through the growth factor receptors subunits BMPR1A, BMPR2 and ACVR2A and the activation of SMAD1-SMAD5-SMAD8 complex and MAPK14/p38. The chain is Growth/differentiation factor 6 (Gdf6) from Mus musculus (Mouse).